The sequence spans 163 residues: 6,7-dimethyl-8-ribityllumazine synthase (163 aa).

Residues Phe27, 58–60, and 87–89 contribute to the 5-amino-6-(D-ribitylamino)uracil site; these read ALE and CVV. 92–93 serves as a coordination point for (2S)-2-hydroxy-3-oxobutyl phosphate; it reads DT. The active-site Proton donor is His95. Asn120 serves as a coordination point for 5-amino-6-(D-ribitylamino)uracil. Residue Arg134 participates in (2S)-2-hydroxy-3-oxobutyl phosphate binding.

The protein belongs to the DMRL synthase family.

The catalysed reaction is (2S)-2-hydroxy-3-oxobutyl phosphate + 5-amino-6-(D-ribitylamino)uracil = 6,7-dimethyl-8-(1-D-ribityl)lumazine + phosphate + 2 H2O + H(+). The protein operates within cofactor biosynthesis; riboflavin biosynthesis; riboflavin from 2-hydroxy-3-oxobutyl phosphate and 5-amino-6-(D-ribitylamino)uracil: step 1/2. Catalyzes the formation of 6,7-dimethyl-8-ribityllumazine by condensation of 5-amino-6-(D-ribitylamino)uracil with 3,4-dihydroxy-2-butanone 4-phosphate. This is the penultimate step in the biosynthesis of riboflavin. This Nitrobacter hamburgensis (strain DSM 10229 / NCIMB 13809 / X14) protein is 6,7-dimethyl-8-ribityllumazine synthase.